Consider the following 345-residue polypeptide: Protein lifeguard 1 (345 aa).

Residues 1 to 115 are disordered; sequence MSHEKSFLVS…GNYQEEGPPS (115 aa). Pro residues-rich tracts occupy residues 24–46 and 79–98; these read APMP…PFQP and GPYP…PPFQ. 7 helical membrane-spanning segments follow: residues 139 to 159, 171 to 191, 202 to 222, 227 to 247, 257 to 277, 281 to 301, and 320 to 340; these read VFLV…IFTF, VWTY…LSCC, LVAL…IASF, AVIM…IFSM, MGVL…CIFI, ILEI…LAVD, and FAAL…LTII.

The protein belongs to the BI1 family. LFG subfamily.

Its subcellular location is the membrane. In terms of biological role, potential apoptotic regulator. The protein is Protein lifeguard 1 (Grina) of Mus musculus (Mouse).